A 103-amino-acid polypeptide reads, in one-letter code: Large ribosomal subunit protein bL21 (103 aa).

This sequence belongs to the bacterial ribosomal protein bL21 family. Part of the 50S ribosomal subunit. Contacts protein L20.

This protein binds to 23S rRNA in the presence of protein L20. The sequence is that of Large ribosomal subunit protein bL21 from Desulfotalea psychrophila (strain LSv54 / DSM 12343).